The following is a 649-amino-acid chain: Threonine--tRNA ligase (649 aa).

Residues 1–60 (MHVTLPDGKQLDLQPGATALDAAKAIGPRLAQDALGATANGELTDLMTPLSDGASITLIT) enclose the TGS domain. A catalytic region spans residues 248–544 (DHRKLGKELE…LIEHYAGDFP (297 aa)). The Zn(2+) site is built by Cys-341, His-392, and His-521.

The protein belongs to the class-II aminoacyl-tRNA synthetase family. As to quaternary structure, homodimer. Zn(2+) is required as a cofactor.

It localises to the cytoplasm. It carries out the reaction tRNA(Thr) + L-threonine + ATP = L-threonyl-tRNA(Thr) + AMP + diphosphate + H(+). Functionally, catalyzes the attachment of threonine to tRNA(Thr) in a two-step reaction: L-threonine is first activated by ATP to form Thr-AMP and then transferred to the acceptor end of tRNA(Thr). Also edits incorrectly charged L-seryl-tRNA(Thr). This chain is Threonine--tRNA ligase, found in Deinococcus radiodurans (strain ATCC 13939 / DSM 20539 / JCM 16871 / CCUG 27074 / LMG 4051 / NBRC 15346 / NCIMB 9279 / VKM B-1422 / R1).